The following is a 114-amino-acid chain: Non-specific lipid-transfer protein 1 (114 aa).

The signal sequence occupies residues methionine 1 to glutamate 23. 4 cysteine pairs are disulfide-bonded: cysteine 27-cysteine 73, cysteine 37-cysteine 50, cysteine 51-cysteine 96, and cysteine 71-cysteine 110.

This sequence belongs to the plant LTP family.

Its function is as follows. Plant non-specific lipid-transfer proteins transfer phospholipids as well as galactolipids across membranes. May play a role in wax or cutin deposition in the cell walls of expanding epidermal cells and certain secretory tissues. This chain is Non-specific lipid-transfer protein 1 (TSW12), found in Solanum lycopersicum (Tomato).